Consider the following 282-residue polypeptide: Ribosomal RNA small subunit methyltransferase A (282 aa).

Residues 1-21 (MPDFPKEHATPMSNRPPAHQA) form a disordered region. Asn-28, Leu-30, Gly-55, Glu-76, Asp-101, and Asn-126 together coordinate S-adenosyl-L-methionine.

This sequence belongs to the class I-like SAM-binding methyltransferase superfamily. rRNA adenine N(6)-methyltransferase family. RsmA subfamily.

The protein localises to the cytoplasm. It catalyses the reaction adenosine(1518)/adenosine(1519) in 16S rRNA + 4 S-adenosyl-L-methionine = N(6)-dimethyladenosine(1518)/N(6)-dimethyladenosine(1519) in 16S rRNA + 4 S-adenosyl-L-homocysteine + 4 H(+). Its function is as follows. Specifically dimethylates two adjacent adenosines (A1518 and A1519) in the loop of a conserved hairpin near the 3'-end of 16S rRNA in the 30S particle. May play a critical role in biogenesis of 30S subunits. The polypeptide is Ribosomal RNA small subunit methyltransferase A (Chromohalobacter salexigens (strain ATCC BAA-138 / DSM 3043 / CIP 106854 / NCIMB 13768 / 1H11)).